A 446-amino-acid chain; its full sequence is MSLRLSSGSKRSYARPSTGSLRGASFGAANACGVAGIGSGFSCAFGSSSTGGNTGVANSCAGFTVNEGGLLSGNEKVTMQNLNDRLASYLDNVQALQEANADLEQKIKGWYEKFGPGSCRGLDHDYSRYFPIIDDLKNQIITSTTSNANAVLQIDNARLTADDFRLKYENELALHQSVEADVNGLRRVLDEITLCRTDLEIQYETLSEELTYLKKNHKEEMQALQCAAGGNVNVEMNAAPGVDLTVLLNNMRAEYEALAEQNRRDAEAWFQEKSASLQQQITEDVGATTSARNELTEMKRTLQTLEIELQSLLATKHSLECSLTETEGNYCTQLAQIQAQISALEEQLHQVRTETEGQKLEYEQLLNVKAHLEKEIETYCLLIGGDEGACKSSSYKSKDYTSGNAGNQSKDSPKAIVVKKVLEEVDQRSKILTTRLHSLEEKSQSN.

The disordered stretch occupies residues 1–20 (MSLRLSSGSKRSYARPSTGS). The segment at 1–74 (MSLRLSSGSK…VNEGGLLSGN (74 aa)) is head. The interval 75–110 (EKVTMQNLNDRLASYLDNVQALQEANADLEQKIKGW) is coil 1A. The 316-residue stretch at 75–390 (EKVTMQNLND…LLIGGDEGAC (316 aa)) folds into the IF rod domain. The linker 1 stretch occupies residues 111-132 (YEKFGPGSCRGLDHDYSRYFPI). A coil 1B region spans residues 133-224 (IDDLKNQIIT…KNHKEEMQAL (92 aa)). A linker 12 region spans residues 225 to 247 (QCAAGGNVNVEMNAAPGVDLTVL). Positions 248-386 (LNNMRAEYEA…ETYCLLIGGD (139 aa)) are coil 2. A tail region spans residues 387–446 (EGACKSSSYKSKDYTSGNAGNQSKDSPKAIVVKKVLEEVDQRSKILTTRLHSLEEKSQSN). The disordered stretch occupies residues 394–413 (SYKSKDYTSGNAGNQSKDSP). Residues 400–410 (YTSGNAGNQSK) are compositionally biased toward polar residues. S438 bears the Phosphoserine mark.

Belongs to the intermediate filament family. In terms of assembly, heterodimer of a type I and a type II keratin. Heterodimer with type II keratin KRT5 leading to the formation of keratin intermediate filament (KIF) network. Interacts with KRT6A to form filaments.

The protein resides in the cytoplasm. Its function is as follows. Essential for the proper assembly of type I and type II keratin protein complexes and formation of keratin intermediate filaments in the inner root sheath (irs). Plays a role in the cytoskeleton organization. The sequence is that of Keratin, type I cytoskeletal 25 from Rattus norvegicus (Rat).